We begin with the raw amino-acid sequence, 191 residues long: Fe/S biogenesis protein NfuA (191 aa).

Positions 149 and 152 each coordinate [4Fe-4S] cluster.

Belongs to the NfuA family. As to quaternary structure, homodimer. [4Fe-4S] cluster serves as cofactor.

In terms of biological role, involved in iron-sulfur cluster biogenesis. Binds a 4Fe-4S cluster, can transfer this cluster to apoproteins, and thereby intervenes in the maturation of Fe/S proteins. Could also act as a scaffold/chaperone for damaged Fe/S proteins. This Escherichia coli O139:H28 (strain E24377A / ETEC) protein is Fe/S biogenesis protein NfuA.